A 2286-amino-acid polypeptide reads, in one-letter code: Non-reducing polyketide synthase fsr1 (2286 aa).

An N-terminal acylcarrier protein transacylase domain (SAT) region spans residues 7-342 (LYLFGDQTFD…IYTALKKTSL (336 aa)). In terms of domain architecture, Ketosynthase family 3 (KS3) spans 368 to 805 (KPKLAIVAMS…GGNSALLIQD (438 aa)). Residues Cys-540, His-675, and His-722 each act as for beta-ketoacyl synthase activity in the active site. The tract at residues 905–1195 (VFTFTGQGAQ…GMVKPTLGQQ (291 aa)) is acyl/malonyl transferases. Ser-996 acts as the For acyl/malonyl transferase activity in catalysis. Residues 1285 to 1417 (HSVVEESGDS…CVVLFKDRSH (133 aa)) form an N-terminal hotdog fold region. Positions 1285-1591 (HSVVEESGDS…IQGVPRRVLK (307 aa)) constitute a PKS/mFAS DH domain. Residues 1296-1588 (KTGIVVEADI…QIAIQGVPRR (293 aa)) are product template (PT) domainn. His-1317 acts as the Proton acceptor; for dehydratase activity in catalysis. A C-terminal hotdog fold region spans residues 1444–1591 (SARFNRPMAY…IQGVPRRVLK (148 aa)). The active-site Proton donor; for dehydratase activity is the Asp-1504. The interval 1600-1639 (KKGQPQRQTQDKPRNTPSQTKDSTPKPAQNKPAAKVEPPK) is disordered. The 76-residue stretch at 1637–1712 (PPKFSTAIRI…DLRAFLGADE (76 aa)) folds into the Carrier 1 domain. Ser-1671 bears the O-(pantetheine 4'-phosphoryl)serine mark. Residues 1716–1735 (ESSSSAASDSGRDTTTTGSA) form a disordered region. In terms of domain architecture, Carrier 2 spans 1748 to 1823 (EVEFERALEI…DLKTMLAREM (76 aa)). The residue at position 1782 (Ser-1782) is an O-(pantetheine 4'-phosphoryl)serine. The tract at residues 1897–2145 (VTGASGGLGS…NWTPVNDIAD (249 aa)) is reductase (R) domain.

The protein operates within polyketide biosynthesis. In terms of biological role, non-reducing polyketide synthase; part of the gene cluster that mediates the biosynthesis of fusarubins, highly pigmented naphthoquinones responsible for the coloration of the fruiting bodies. The non-reducing polyketide synthase FSR1 is responsible for the condensation of seven acetyl-CoA units to yield a haptaketide. After rings A and B are formed by aldol-type cyclization, the PKS-derived product is released as 6-O-demethylfusarubinaldehyde. Then, two hydroxyl groups at C-5 and C-10 are incorporated by FSR3, and simultaneously hydroxyl groups at C-6 and C-8 are methylated by FSR2. The aldehyde is, on the one hand, reduced by FSR3 to 8-O-methylfusarubin alcohol, which equilibrates mainly with 8-O-methylfusarubin and only small amounts of 8-O-methylnectriafurone. On the other hand, the aldehyde can be oxidized to form 8-O-methylfusarubinic acid, a reaction driven by FSR3 equilibrating with 8-O-methylfusarubinlactone, finally resulting in 8-O-methylanhydrofusarubinlactol after a further reduction step and loss of water. 8-O-Methylfusarubinic acid can also undergo decarboxylation, resulting in 8-O-methyl-13-hydroxynorjavanicin after another hydroxylation step at C-13. Both steps are most likely also accomplished by FSR3. No enzymatic function has been determined so far for either FSR4 and FSR5. Their deletion does not alter the product spectrum, but the possibility that they catalyze specific enzymatic steps during perithecium development cannot be ruled out. FSR4 might possess a regulatory function in the biosynthesis of fusarubins. In Gibberella fujikuroi (strain CBS 195.34 / IMI 58289 / NRRL A-6831) (Bakanae and foot rot disease fungus), this protein is Non-reducing polyketide synthase fsr1.